Consider the following 501-residue polypeptide: Armadillo repeat-containing protein 6 (501 aa).

The residue at position 64 (serine 64) is a Phosphoserine. ARM repeat units lie at residues 220–264, 274–318, 319–369, and 370–412; these read GVLP…HAHN, KGLK…DLGG, LSIL…RAGG, and TESI…VEGG. At histidine 263 the chain carries Pros-methylhistidine.

The protein belongs to the ARMC6 family. Post-translationally, methylated at His-263 by METTL9.

This is Armadillo repeat-containing protein 6 (ARMC6) from Pongo abelii (Sumatran orangutan).